Consider the following 238-residue polypeptide: 1-(5-phosphoribosyl)-5-[(5-phosphoribosylamino)methylideneamino] imidazole-4-carboxamide isomerase (238 aa).

Catalysis depends on Asp8, which acts as the Proton acceptor. The active-site Proton donor is Asp129.

It belongs to the HisA/HisF family.

The protein localises to the cytoplasm. It catalyses the reaction 1-(5-phospho-beta-D-ribosyl)-5-[(5-phospho-beta-D-ribosylamino)methylideneamino]imidazole-4-carboxamide = 5-[(5-phospho-1-deoxy-D-ribulos-1-ylimino)methylamino]-1-(5-phospho-beta-D-ribosyl)imidazole-4-carboxamide. Its pathway is amino-acid biosynthesis; L-histidine biosynthesis; L-histidine from 5-phospho-alpha-D-ribose 1-diphosphate: step 4/9. The protein is 1-(5-phosphoribosyl)-5-[(5-phosphoribosylamino)methylideneamino] imidazole-4-carboxamide isomerase of Anaeromyxobacter sp. (strain Fw109-5).